A 107-amino-acid chain; its full sequence is Nucleoid-associated protein BT_0257 (107 aa).

The protein belongs to the YbaB/EbfC family. In terms of assembly, homodimer.

The protein localises to the cytoplasm. The protein resides in the nucleoid. Functionally, binds to DNA and alters its conformation. May be involved in regulation of gene expression, nucleoid organization and DNA protection. The protein is Nucleoid-associated protein BT_0257 of Bartonella tribocorum (strain CIP 105476 / IBS 506).